We begin with the raw amino-acid sequence, 490 residues long: ATP synthase subunit beta, chloroplastic (490 aa).

Position 170–177 (170–177) interacts with ATP; that stretch reads GGAGVGKT.

This sequence belongs to the ATPase alpha/beta chains family. As to quaternary structure, F-type ATPases have 2 components, CF(1) - the catalytic core - and CF(0) - the membrane proton channel. CF(1) has five subunits: alpha(3), beta(3), gamma(1), delta(1), epsilon(1). CF(0) has four main subunits: a(1), b(1), b'(1) and c(9-12).

Its subcellular location is the plastid. The protein resides in the chloroplast thylakoid membrane. The catalysed reaction is ATP + H2O + 4 H(+)(in) = ADP + phosphate + 5 H(+)(out). Produces ATP from ADP in the presence of a proton gradient across the membrane. The catalytic sites are hosted primarily by the beta subunits. This chain is ATP synthase subunit beta, chloroplastic, found in Cressa truxillensis (Spreading alkaliweed).